Consider the following 186-residue polypeptide: Fucolectin-6 (186 aa).

The first 32 residues, methionine 1–alanine 32, serve as a signal peptide directing secretion. The interval glutamine 40–asparagine 186 is F5/8 type C-like. Asparagine 67, aspartate 70, asparagine 72, and serine 81 together coordinate Ca(2+). 3 disulfides stabilise this stretch: cysteine 82–cysteine 175, cysteine 114–cysteine 115, and cysteine 137–cysteine 153. Alpha-L-fucose is bound by residues histidine 84 and arginine 111. A Cell attachment site motif is present at residues arginine 111–aspartate 113. An alpha-L-fucose-binding site is contributed by arginine 118. The Ca(2+) site is built by cysteine 175 and glutamate 176.

This sequence belongs to the fucolectin family. In terms of assembly, homotrimer. Gill mucous cells.

The protein localises to the secreted. Acts as a defensive agent. Recognizes blood group fucosylated oligosaccharides including A, B, H and Lewis B-type antigens. Does not recognize Lewis A antigen and has low affinity for monovalent haptens. In Anguilla japonica (Japanese eel), this protein is Fucolectin-6.